Reading from the N-terminus, the 232-residue chain is Anti-sigma-K factor RskA (232 aa).

Residues 1–90 (MTEHTDFELL…EVRRQSRWRT (90 aa)) are Cytoplasmic-facing. The chain crosses the membrane as a helical span at residues 91–111 (AAFASAAAIAVGLGAFGLGVL). Over 112–232 (TRPSPPPTVA…GTILAELPLG (121 aa)) the chain is Extracellular.

This sequence belongs to the anti-sigma-K factor family.

The protein localises to the cell membrane. Functionally, an anti-sigma factor for extracytoplasmic function (ECF) sigma factor SigK. ECF sigma factors are held in an inactive form by an anti-sigma factor until released by regulated intramembrane proteolysis (RIP). RIP occurs when an extracytoplasmic signal triggers a concerted proteolytic cascade to transmit information and elicit cellular responses. The membrane-spanning regulatory substrate protein is first cut extracytoplasmically (site-1 protease, S1P), then within the membrane itself (site-2 protease, S2P, Rip1), while cytoplasmic proteases finish degrading the regulatory protein, liberating the sigma factor. The protein is Anti-sigma-K factor RskA (rskA) of Mycobacterium tuberculosis (strain ATCC 25177 / H37Ra).